We begin with the raw amino-acid sequence, 289 residues long: D-alanine aminotransferase (289 aa).

Position 31 (Y31) interacts with substrate. R50 serves as a coordination point for pyridoxal 5'-phosphate. Substrate-binding residues include R99 and H101. At K147 the chain carries N6-(pyridoxal phosphate)lysine. E179 serves as a coordination point for pyridoxal 5'-phosphate.

This sequence belongs to the class-IV pyridoxal-phosphate-dependent aminotransferase family. Homodimer. Requires pyridoxal 5'-phosphate as cofactor.

The enzyme catalyses D-alanine + 2-oxoglutarate = D-glutamate + pyruvate. Acts on the D-isomers of alanine, leucine, aspartate, glutamate, aminobutyrate, norvaline and asparagine. The enzyme transfers an amino group from a substrate D-amino acid to the pyridoxal phosphate cofactor to form pyridoxamine and an alpha-keto acid in the first half-reaction. The second half-reaction is the reverse of the first, transferring the amino group from the pyridoxamine to a second alpha-keto acid to form the product D-amino acid via a ping-pong mechanism. This is an important process in the formation of D-alanine and D-glutamate, which are essential bacterial cell wall components. In Listeria monocytogenes serovar 1/2a (strain ATCC BAA-679 / EGD-e), this protein is D-alanine aminotransferase (dat).